A 203-amino-acid polypeptide reads, in one-letter code: Recombination protein RecR (203 aa).

The segment at 56 to 71 (CTVCGNVSDDERCRIC) adopts a C4-type zinc-finger fold. Residues 79-179 (SVVCVVEEPK…TVTRIASGLP (101 aa)) enclose the Toprim domain.

This sequence belongs to the RecR family.

Its function is as follows. May play a role in DNA repair. It seems to be involved in an RecBC-independent recombinational process of DNA repair. It may act with RecF and RecO. This is Recombination protein RecR from Mycobacterium leprae (strain TN).